The chain runs to 875 residues: Neurotrypsin (875 aa).

Positions 1–20 (MTLARFVLALVLGALPEVVG) are cleaved as a signal peptide. The N-linked (GlcNAc...) asparagine glycan is linked to N26. The disordered stretch occupies residues 29-68 (LHHRHRHSPPPGPQYPYYLPTHQRPPRTRPPPPLPRFSRP). In terms of domain architecture, Kringle spans 93-165 (CPPGEPWVSV…GKVDWGYCDC (73 aa)). Cystine bridges form between C93–C165, C109–C149, C138–C163, C195–C259, C208–C269, C239–C249, C305–C369, C318–C379, C349–C359, C412–C475, C425–C485, C455–C465, C525–C589, C538–C599, C569–C579, C619–C750, C661–C677, C765–C831, C794–C808, and C821–C850. SRCR domains lie at 170–271 (VRLR…TCSF), 280–381 (IRLV…SCTP), 387–487 (IRLA…ACYP), and 500–601 (VRLM…ICDY). The tract at residues 619–630 (CGLRLLHRRQKR) is zymogen activation region. A Peptidase S1 domain is found at 631 to 874 (IIGGKNSLRG…FVPWIKSVTK (244 aa)). The active-site Charge relay system is the H676. A glycan (N-linked (GlcNAc...) asparagine) is linked at N683. The active-site Charge relay system is D726. S825 acts as the Charge relay system in catalysis.

It belongs to the peptidase S1 family.

It is found in the secreted. Functionally, plays a role in neuronal plasticity and the proteolytic action may subserve structural reorganizations associated with learning and memory operations. This chain is Neurotrypsin (PRSS12), found in Trachypithecus phayrei (Phayre's leaf monkey).